Reading from the N-terminus, the 1242-residue chain is DNA polymerase catalytic subunit (1242 aa).

Disordered stretches follow at residues 14 to 38 (GAVA…RPPQ), 644 to 665 (LQSA…SSSS), 877 to 898 (EGDS…GGSN), and 1108 to 1163 (TAPQ…KPPS). Residues 653 to 665 (GVSPGSGSNSSSS) show a composition bias toward low complexity. The span at 1110–1119 (PQGSSDNGDS) shows a compositional bias: polar residues. Residues 1145 to 1155 (ESNRRGGEPAK) are compositionally biased toward basic and acidic residues.

Belongs to the DNA polymerase type-B family. Forms a complex with the ssDNA-binding protein UL57, the DNA polymerase processivity factor UL44, and the alkaline exonuclease UL98. Interacts with the putative helicase-primase complex composed of UL70, UL102 and UL105 proteins; these interactions may coordinate leading and lagging strand DNA synthesis at the replication fork.

The protein resides in the host nucleus. The enzyme catalyses DNA(n) + a 2'-deoxyribonucleoside 5'-triphosphate = DNA(n+1) + diphosphate. Its function is as follows. Replicates viral genomic DNA in the late phase of lytic infection, producing long concatemeric DNA. The replication complex is composed of six viral proteins: the DNA polymerase, processivity factor, primase, primase-associated factor, helicase, and ssDNA-binding protein. The protein is DNA polymerase catalytic subunit (UL54) of Homo sapiens (Human).